The following is a 466-amino-acid chain: Argininosuccinate lyase (466 aa).

This sequence belongs to the lyase 1 family. Argininosuccinate lyase subfamily.

It localises to the cytoplasm. The enzyme catalyses 2-(N(omega)-L-arginino)succinate = fumarate + L-arginine. The protein operates within amino-acid biosynthesis; L-arginine biosynthesis; L-arginine from L-ornithine and carbamoyl phosphate: step 3/3. This is Argininosuccinate lyase from Brucella canis (strain ATCC 23365 / NCTC 10854 / RM-666).